The sequence spans 335 residues: Transcriptional adapter 1 (335 aa).

The protein belongs to the TADA1 family. In terms of assembly, component of the STAGA transcription coactivator-HAT complex, at least composed of SUPT3H, GCN5L2, TAF5L, TAF6L, SUPT7L, TADA3L, TAD1L, TAF10, TAF12, TRRAP and TAF9.

It localises to the nucleus. Its function is as follows. Probably involved in transcriptional regulation. This Mus musculus (Mouse) protein is Transcriptional adapter 1 (Tada1).